The chain runs to 172 residues: Shikimate kinase (172 aa).

11–16 provides a ligand contact to ATP; sequence ASGKTE. Position 15 (threonine 15) interacts with Mg(2+). 3 residues coordinate substrate: aspartate 33, arginine 57, and glycine 80. ATP is bound at residue arginine 120. Residue arginine 142 participates in substrate binding.

The protein belongs to the shikimate kinase family. In terms of assembly, monomer. Requires Mg(2+) as cofactor.

It is found in the cytoplasm. The enzyme catalyses shikimate + ATP = 3-phosphoshikimate + ADP + H(+). Its pathway is metabolic intermediate biosynthesis; chorismate biosynthesis; chorismate from D-erythrose 4-phosphate and phosphoenolpyruvate: step 5/7. Its function is as follows. Catalyzes the specific phosphorylation of the 3-hydroxyl group of shikimic acid using ATP as a cosubstrate. The polypeptide is Shikimate kinase (Flavobacterium psychrophilum (strain ATCC 49511 / DSM 21280 / CIP 103535 / JIP02/86)).